A 323-amino-acid chain; its full sequence is L-lactate dehydrogenase (323 aa).

NAD(+) contacts are provided by V12, D33, and Y65. Substrate is bound by residues R94 and 126–129 (NPCD). T149 contacts NAD(+). 154 to 157 (ETMR) contacts substrate. The active-site Proton acceptor is H181. Position 234 (T234) interacts with substrate.

This sequence belongs to the LDH/MDH superfamily. LDH family. Homotetramer.

It is found in the cytoplasm. It carries out the reaction (S)-lactate + NAD(+) = pyruvate + NADH + H(+). It functions in the pathway fermentation; pyruvate fermentation to lactate; (S)-lactate from pyruvate: step 1/1. Catalyzes the conversion of lactate to pyruvate. This is L-lactate dehydrogenase from Mycoplasmoides gallisepticum (strain R(low / passage 15 / clone 2)) (Mycoplasma gallisepticum).